The chain runs to 278 residues: Heat stress transcription factor C-2b (278 aa).

Residues 105-114 (AAGGGGGGGG) show a composition bias toward gly residues. The disordered stretch occupies residues 105–132 (AAGGGGGGGGGKRRDASADGGGGGGDED). Positions 143 to 179 (LKQEQRTIDDRVAAMWRRVQETERRPKQMLAFLLKVV) are hydrophobic repeat HR-A/B. The Nuclear localization signal signature appears at 219–222 (KRAR).

The protein belongs to the HSF family. Class C subfamily. As to quaternary structure, homotrimer. Exhibits temperature-dependent phosphorylation.

It localises to the nucleus. Functionally, transcriptional regulator that specifically binds DNA of heat shock promoter elements (HSE). This is Heat stress transcription factor C-2b (HSFC2B) from Oryza sativa subsp. japonica (Rice).